A 131-amino-acid chain; its full sequence is Insertion element IS1 protein InsB (131 aa).

It belongs to the transposase 27 family.

Its function is as follows. Absolutely required for transposition of IS1. The chain is Insertion element IS1 protein InsB (insB) from Shigella sonnei.